The sequence spans 300 residues: 5'-adenylylsulfate reductase-like 5 (300 aa).

A signal peptide spans 1–23 (MDSRVSILFVCAIAVSCFTSGSA). Residues 41 to 161 (FDLEAKCPPS…LIEFYEEATG (121 aa)) enclose the Thioredoxin domain. An N-linked (GlcNAc...) asparagine glycan is attached at Asn136. A helical membrane pass occupies residues 202–222 (FLVLSLLFICLQMAILVFPIA).

It is found in the membrane. The protein is 5'-adenylylsulfate reductase-like 5 (APRL5) of Arabidopsis thaliana (Mouse-ear cress).